Here is a 500-residue protein sequence, read N- to C-terminus: UDP-GalNAc:beta-1,3-N-acetylgalactosaminyltransferase 2 (500 aa).

Residues 1 to 6 (MRNWLV) are Cytoplasmic-facing. Residues 7–23 (LLCPCVLGAALHLWLRL) traverse the membrane as a helical; Signal-anchor for type II membrane protein segment. Residues 24-500 (RSPPPACASG…CGDPCRCQAR (477 aa)) are Lumenal-facing. N-linked (GlcNAc...) asparagine glycans are attached at residues N116 and N174.

Belongs to the glycosyltransferase 31 family. Post-translationally, N-glycosylated. Expressed in all tissues examined, but at highest levels in testis, adipose tissue, skeletal muscle and ovary.

The protein resides in the golgi apparatus membrane. The protein localises to the endoplasmic reticulum. It carries out the reaction 3-O-(N-acetyl-beta-D-glucosaminyl-(1-&gt;4)-alpha-D-mannosyl)-L-threonyl-[protein] + UDP-N-acetyl-alpha-D-galactosamine = 3-O-[beta-D-GalNAc-(1-&gt;3)-beta-D-GlcNAc-(1-&gt;4)-alpha-D-Man]-L-Thr-[protein] + UDP + H(+). The protein operates within protein modification; protein glycosylation. In terms of biological role, beta-1,3-N-acetylgalactosaminyltransferase that synthesizes a unique carbohydrate structure, GalNAc-beta-1-3GlcNAc, on N- and O-glycans. Has no galactose nor galactosaminyl transferase activity toward any acceptor substrate. Involved in alpha-dystroglycan (DAG1) glycosylation: acts coordinately with GTDC2/POMGnT2 to synthesize a GalNAc-beta3-GlcNAc-beta-terminus at the 4-position of protein O-mannose in the biosynthesis of the phosphorylated O-mannosyl trisaccharide (N-acetylgalactosamine-beta-3-N-acetylglucosamine-beta-4-(phosphate-6-)mannose), a carbohydrate structure present in alpha-dystroglycan, which is required for binding laminin G-like domain-containing extracellular proteins with high affinity. The chain is UDP-GalNAc:beta-1,3-N-acetylgalactosaminyltransferase 2 (B3GALNT2) from Homo sapiens (Human).